A 432-amino-acid chain; its full sequence is Adenylosuccinate synthetase (432 aa).

GTP is bound by residues glycine 12–lysine 18 and glycine 40–threonine 42. The active-site Proton acceptor is the aspartate 13. Positions 13 and 40 each coordinate Mg(2+). IMP is bound by residues aspartate 13–lysine 16, asparagine 38–histidine 41, threonine 132, arginine 146, glutamine 226, threonine 241, and arginine 305. Histidine 41 serves as the catalytic Proton donor. Substrate is bound at residue threonine 301–arginine 307. Residues arginine 307, lysine 333–aspartate 335, and serine 415–serine 417 each bind GTP.

This sequence belongs to the adenylosuccinate synthetase family. As to quaternary structure, homodimer. Mg(2+) serves as cofactor.

It is found in the cytoplasm. The catalysed reaction is IMP + L-aspartate + GTP = N(6)-(1,2-dicarboxyethyl)-AMP + GDP + phosphate + 2 H(+). It participates in purine metabolism; AMP biosynthesis via de novo pathway; AMP from IMP: step 1/2. Its function is as follows. Plays an important role in the de novo pathway of purine nucleotide biosynthesis. Catalyzes the first committed step in the biosynthesis of AMP from IMP. The protein is Adenylosuccinate synthetase of Chelativorans sp. (strain BNC1).